The following is a 66-amino-acid chain: Antitoxin RelB2 (66 aa).

Functionally, antitoxin component of a type II toxin-antitoxin (TA) system. Neutralizes the effect of cognate toxin RelE2, but no other RelE or ParE toxin. The polypeptide is Antitoxin RelB2 (relB2) (Caulobacter vibrioides (strain ATCC 19089 / CIP 103742 / CB 15) (Caulobacter crescentus)).